We begin with the raw amino-acid sequence, 117 residues long: Large ribosomal subunit protein uL18 (117 aa).

Belongs to the universal ribosomal protein uL18 family. Part of the 50S ribosomal subunit; part of the 5S rRNA/L5/L18/L25 subcomplex. Contacts the 5S and 23S rRNAs.

In terms of biological role, this is one of the proteins that bind and probably mediate the attachment of the 5S RNA into the large ribosomal subunit, where it forms part of the central protuberance. The chain is Large ribosomal subunit protein uL18 from Blochmanniella pennsylvanica (strain BPEN).